The chain runs to 131 residues: ER membrane protein complex subunit 5 (131 aa).

Residues 1–3 lie on the Cytoplasmic side of the membrane; that stretch reads MAP. The helical transmembrane segment at 4–22 threads the bilayer; that stretch reads SLWKGLVGVGLFALAHAAF. Topologically, residues 23-43 are lumenal; sequence SAAQHRSYMRLTEKEDESLPI. The helical transmembrane segment at 44-63 threads the bilayer; the sequence is DIVLQTLLAFAVTCYGIVHI. Over 64–131 the chain is Cytoplasmic; that stretch reads AGEFKDMDAT…KLRKFDSLRR (68 aa). Position 120 is a phosphoserine (Ser120).

It belongs to the membrane magnesium transporter (TC 1.A.67) family. As to quaternary structure, component of the ER membrane protein complex (EMC). As to expression, abundant in heart muscle and kidney with lower levels in liver and brain and very little expression in intestine or colon. In kidney, highest levels in distal convoluted tubule.

The protein localises to the endoplasmic reticulum membrane. The protein resides in the golgi apparatus membrane. Its subcellular location is the early endosome membrane. In terms of biological role, part of the endoplasmic reticulum membrane protein complex (EMC) that enables the energy-independent insertion into endoplasmic reticulum membranes of newly synthesized membrane proteins. Preferentially accommodates proteins with transmembrane domains that are weakly hydrophobic or contain destabilizing features such as charged and aromatic residues. Involved in the cotranslational insertion of multi-pass membrane proteins in which stop-transfer membrane-anchor sequences become ER membrane spanning helices. It is also required for the post-translational insertion of tail-anchored/TA proteins in endoplasmic reticulum membranes. By mediating the proper cotranslational insertion of N-terminal transmembrane domains in an N-exo topology, with translocated N-terminus in the lumen of the ER, controls the topology of multi-pass membrane proteins like the G protein-coupled receptors. By regulating the insertion of various proteins in membranes, it is indirectly involved in many cellular processes. May be involved Mg(2+) transport. This chain is ER membrane protein complex subunit 5, found in Mus musculus (Mouse).